The following is an 81-amino-acid chain: MRLFLSLLVVVLSMVLKGPTPAQGVPDVSNPFDVLEEFGKTLEDNVGEFINLITQSELPAKTRDWFSETFRKVKEKLRINS.

Positions 1–24 (MRLFLSLLVVVLSMVLKGPTPAQG) are cleaved as a signal peptide.

It belongs to the apolipoprotein C1 family.

It is found in the secreted. In Macaca fascicularis (Crab-eating macaque), this protein is Apolipoprotein C-I, acidic form (APOC1A).